Here is a 557-residue protein sequence, read N- to C-terminus: Small ribosomal subunit protein bS1 (557 aa).

S1 motif domains are found at residues Gly-21 to Glu-87, Ala-105 to Arg-171, Gly-192 to Lys-260, and Gly-277 to Lys-347. Lys-229, Lys-279, and Lys-363 each carry N6-acetyllysine. S1 motif domains are found at residues Gly-364 to Lys-434 and Gly-451 to Arg-520.

The protein belongs to the bacterial ribosomal protein bS1 family. In terms of assembly, part of the 30S ribosomal subunit. Some nascent polypeptide chains are able to cross-link to this protein in situ. Can be cross-linked to mRNA in the ribosome. In terms of processing, phosphorylated; probably on a serine.

Required for translation of most natural mRNAs except for leaderless mRNA. Binds mRNA upstream of the Shine-Dalgarno (SD) sequence and helps it bind to the 30S ribosomal subunit; acts as an RNA chaperone to unfold structured mRNA on the ribosome but is not essential for mRNAs with strong SDs and little 5'-UTR structure, thus it may help fine-tune which mRNAs that are translated. Unwinds dsRNA by binding to transiently formed ssRNA regions; binds about 10 nucleotides. Has a preference for polypyrimidine tracts. Negatively autoregulates its own translation. This is Small ribosomal subunit protein bS1 (rpsA) from Escherichia coli O157:H7.